The sequence spans 195 residues: Imidazoleglycerol-phosphate dehydratase (195 aa).

The protein belongs to the imidazoleglycerol-phosphate dehydratase family.

It is found in the cytoplasm. The catalysed reaction is D-erythro-1-(imidazol-4-yl)glycerol 3-phosphate = 3-(imidazol-4-yl)-2-oxopropyl phosphate + H2O. The protein operates within amino-acid biosynthesis; L-histidine biosynthesis; L-histidine from 5-phospho-alpha-D-ribose 1-diphosphate: step 6/9. This Cupriavidus taiwanensis (strain DSM 17343 / BCRC 17206 / CCUG 44338 / CIP 107171 / LMG 19424 / R1) (Ralstonia taiwanensis (strain LMG 19424)) protein is Imidazoleglycerol-phosphate dehydratase.